The chain runs to 301 residues: Methionyl-tRNA formyltransferase (301 aa).

Ser-110–Pro-113 serves as a coordination point for (6S)-5,6,7,8-tetrahydrofolate.

Belongs to the Fmt family.

It carries out the reaction L-methionyl-tRNA(fMet) + (6R)-10-formyltetrahydrofolate = N-formyl-L-methionyl-tRNA(fMet) + (6S)-5,6,7,8-tetrahydrofolate + H(+). Functionally, attaches a formyl group to the free amino group of methionyl-tRNA(fMet). The formyl group appears to play a dual role in the initiator identity of N-formylmethionyl-tRNA by promoting its recognition by IF2 and preventing the misappropriation of this tRNA by the elongation apparatus. This chain is Methionyl-tRNA formyltransferase, found in Acidiphilium cryptum (strain JF-5).